We begin with the raw amino-acid sequence, 640 residues long: Isoniazid-induced protein IniA (640 aa).

A helical transmembrane segment spans residues 497 to 519 (IGMLSSVVGLGLFNPLSVGAGLI). A coiled-coil region spans residues 560–628 (RDRLKMIQRL…QVNDNLAGLE (69 aa)).

In terms of assembly, forms multimeric structures containing a central pore.

The protein resides in the cell membrane. Functionally, participates in the development of tolerance to both isoniazid and ethambutol. May function through a MDR-pump like mechanism, although it does not appear to directly transport isoniazid from the cell. In Mycobacterium tuberculosis (strain CDC 1551 / Oshkosh), this protein is Isoniazid-induced protein IniA (iniA).